An 856-amino-acid polypeptide reads, in one-letter code: Envelope glycoprotein gp160 (856 aa).

The N-terminal stretch at 1-31 (MRVKGIRRNCQHLWIWGTMLFGMWMICSAVE) is a signal peptide. Residues 32–684 (QLWVTVYYGV…ITNWLWYIKI (653 aa)) are Extracellular-facing. C53 and C73 form a disulfide bridge. Residues N87, N134, N140, N151, N155, N183, N197, N234, N241, N262, N276, N289, and N295 are each glycosylated (N-linked (GlcNAc...) asparagine; by host). 5 cysteine pairs are disulfide-bonded: C118–C205, C125–C196, C130–C152, C218–C247, and C228–C239. The segment at 130–151 (CIDKNITDWENKTIIGGGEVKN) is V1. A V2 region spans residues 152–196 (CSFNITTSIRDKVHKEYALFYKLDVVPIKSNNDSSTYTRYRLIHC). Residues 296 to 329 (CTRPNNNVRRRHIHIGPGRAFYTGEIRGNIRQAH) form a V3 region. C296 and C330 are disulfide-bonded. 4 N-linked (GlcNAc...) asparagine; by host glycosylation sites follow: N331, N338, N354, and N360. Residues 362-372 (SSGGDPEIVTH) are CD4-binding loop. Cystine bridges form between C376–C444 and C383–C417. A V4 region spans residues 383–417 (CDSTQLFNSTWNVTGISTEGNNNTEENGDTITLPC). Residues N390, N394, N404, N447, and N459 are each glycosylated (N-linked (GlcNAc...) asparagine; by host). V5 stretches follow at residues 460–470 (SSSREEIFRPG) and 462–470 (SREEIFRPG). Positions 511–532 (AVGAIGAMFLGFLGAAGSTMGA) are fusion peptide. Residues 574–592 (KQLQARVLAVERYLRDQQL) are immunosuppression. A disulfide bridge links C598 with C604. N-linked (GlcNAc...) asparagine; by host glycans are attached at residues N611, N616, N625, and N637. A coiled-coil region spans residues 633-667 (REIDNYTSLIYNLIEESQNQQEKNEQELLELDKWA). The segment at 662-683 (ELDKWASLWNWFSITNWLWYIK) is MPER; binding to GalCer. The helical transmembrane segment at 685-705 (FIMIVGGLVGLRIVFSVLSIV) threads the bilayer. Over 706–856 (NRVRQGYSPL…IRQGLERALL (151 aa)) the chain is Cytoplasmic. A YXXL motif; contains endocytosis signal motif is present at residues 712–715 (YSPL). The interval 716–742 (SFQTHLPTPRGPDRPEGTEEEGGERDR) is disordered. Residues C764 and C837 are each lipidated (S-palmitoyl cysteine; by host). Residues 855-856 (LL) carry the Di-leucine internalization motif motif.

This sequence belongs to the HIV-1 env protein family. In terms of assembly, the mature envelope protein (Env) consists of a homotrimer of non-covalently associated gp120-gp41 heterodimers. The resulting complex protrudes from the virus surface as a spike. There seems to be as few as 10 spikes on the average virion. Interacts with host CD4, CCR5 and CXCR4. Gp120 also interacts with the C-type lectins CD209/DC-SIGN and CLEC4M/DC-SIGNR (collectively referred to as DC-SIGN(R)). Gp120 and gp41 interact with GalCer. Gp120 interacts with host ITGA4/ITGB7 complex; on CD4+ T-cells, this interaction results in rapid activation of integrin ITGAL/LFA-1, which facilitates efficient cell-to-cell spreading of HIV-1. Gp120 interacts with cell-associated heparan sulfate; this interaction increases virus infectivity on permissive cells and may be involved in infection of CD4- cells. As to quaternary structure, the mature envelope protein (Env) consists of a homotrimer of non-covalently associated gp120-gp41 heterodimers. The resulting complex protrudes from the virus surface as a spike. There seems to be as few as 10 spikes on the average virion. In terms of processing, highly glycosylated by host. The high number of glycan on the protein is reffered to as 'glycan shield' because it contributes to hide protein sequence from adaptive immune system. Palmitoylation of the transmembrane protein and of Env polyprotein (prior to its proteolytic cleavage) is essential for their association with host cell membrane lipid rafts. Palmitoylation is therefore required for envelope trafficking to classical lipid rafts, but not for viral replication. Post-translationally, specific enzymatic cleavages in vivo yield mature proteins. Envelope glycoproteins are synthesized as an inactive precursor that is heavily N-glycosylated and processed likely by host cell furin in the Golgi to yield the mature SU and TM proteins. The cleavage site between SU and TM requires the minimal sequence [KR]-X-[KR]-R. About 2 of the 9 disulfide bonds of gp41 are reduced by P4HB/PDI, following binding to CD4 receptor.

The protein resides in the virion membrane. It is found in the host cell membrane. Its subcellular location is the host endosome membrane. In terms of biological role, oligomerizes in the host endoplasmic reticulum into predominantly trimers. In a second time, gp160 transits in the host Golgi, where glycosylation is completed. The precursor is then proteolytically cleaved in the trans-Golgi and thereby activated by cellular furin or furin-like proteases to produce gp120 and gp41. Its function is as follows. Attaches the virus to the host lymphoid cell by binding to the primary receptor CD4. This interaction induces a structural rearrangement creating a high affinity binding site for a chemokine coreceptor like CXCR4 and/or CCR5. Acts as a ligand for CD209/DC-SIGN and CLEC4M/DC-SIGNR, which are respectively found on dendritic cells (DCs), and on endothelial cells of liver sinusoids and lymph node sinuses. These interactions allow capture of viral particles at mucosal surfaces by these cells and subsequent transmission to permissive cells. HIV subverts the migration properties of dendritic cells to gain access to CD4+ T-cells in lymph nodes. Virus transmission to permissive T-cells occurs either in trans (without DCs infection, through viral capture and transmission), or in cis (following DCs productive infection, through the usual CD4-gp120 interaction), thereby inducing a robust infection. In trans infection, bound virions remain infectious over days and it is proposed that they are not degraded, but protected in non-lysosomal acidic organelles within the DCs close to the cell membrane thus contributing to the viral infectious potential during DCs' migration from the periphery to the lymphoid tissues. On arrival at lymphoid tissues, intact virions recycle back to DCs' cell surface allowing virus transmission to CD4+ T-cells. Acts as a class I viral fusion protein. Under the current model, the protein has at least 3 conformational states: pre-fusion native state, pre-hairpin intermediate state, and post-fusion hairpin state. During fusion of viral and target intracellular membranes, the coiled coil regions (heptad repeats) assume a trimer-of-hairpins structure, positioning the fusion peptide in close proximity to the C-terminal region of the ectodomain. The formation of this structure appears to drive apposition and subsequent fusion of viral and target cell membranes. Complete fusion occurs in host cell endosomes and is dynamin-dependent, however some lipid transfer might occur at the plasma membrane. The virus undergoes clathrin-dependent internalization long before endosomal fusion, thus minimizing the surface exposure of conserved viral epitopes during fusion and reducing the efficacy of inhibitors targeting these epitopes. Membranes fusion leads to delivery of the nucleocapsid into the cytoplasm. The chain is Envelope glycoprotein gp160 from Homo sapiens (Human).